Consider the following 434-residue polypeptide: Adenylosuccinate synthetase (434 aa).

Residues 15 to 21 (GDEGKGK) and 43 to 45 (GHT) contribute to the GTP site. Asp16 serves as the catalytic Proton acceptor. 2 residues coordinate Mg(2+): Asp16 and Gly43. IMP-binding positions include 16-19 (DEGK), 41-44 (NAGH), Thr133, Arg147, Gln228, Thr243, and Arg307. His44 (proton donor) is an active-site residue. 303-309 (SVTGRAR) serves as a coordination point for substrate. GTP contacts are provided by residues Arg309, 335 to 337 (KLD), and 418 to 420 (STG).

It belongs to the adenylosuccinate synthetase family. As to quaternary structure, homodimer. Mg(2+) serves as cofactor.

The protein resides in the cytoplasm. It carries out the reaction IMP + L-aspartate + GTP = N(6)-(1,2-dicarboxyethyl)-AMP + GDP + phosphate + 2 H(+). It participates in purine metabolism; AMP biosynthesis via de novo pathway; AMP from IMP: step 1/2. In terms of biological role, plays an important role in the de novo pathway of purine nucleotide biosynthesis. Catalyzes the first committed step in the biosynthesis of AMP from IMP. The protein is Adenylosuccinate synthetase of Neisseria gonorrhoeae (strain NCCP11945).